The primary structure comprises 104 residues: Large ribosomal subunit protein uL24 (104 aa).

It belongs to the universal ribosomal protein uL24 family. As to quaternary structure, part of the 50S ribosomal subunit.

Its function is as follows. One of two assembly initiator proteins, it binds directly to the 5'-end of the 23S rRNA, where it nucleates assembly of the 50S subunit. In terms of biological role, one of the proteins that surrounds the polypeptide exit tunnel on the outside of the subunit. This chain is Large ribosomal subunit protein uL24, found in Shewanella halifaxensis (strain HAW-EB4).